The sequence spans 363 residues: tRNA-specific 2-thiouridylase MnmA (363 aa).

ATP is bound by residues 8 to 15 (AMSGGVDS) and leucine 34. Catalysis depends on cysteine 103, which acts as the Nucleophile. Cysteine 103 and cysteine 195 are disulfide-bonded. Glycine 127 contacts ATP. The interaction with tRNA stretch occupies residues 145 to 147 (KDQ). Catalysis depends on cysteine 195, which acts as the Cysteine persulfide intermediate.

Belongs to the MnmA/TRMU family.

The protein localises to the cytoplasm. It catalyses the reaction S-sulfanyl-L-cysteinyl-[protein] + uridine(34) in tRNA + AH2 + ATP = 2-thiouridine(34) in tRNA + L-cysteinyl-[protein] + A + AMP + diphosphate + H(+). Functionally, catalyzes the 2-thiolation of uridine at the wobble position (U34) of tRNA, leading to the formation of s(2)U34. This chain is tRNA-specific 2-thiouridylase MnmA, found in Thermobifida fusca (strain YX).